The primary structure comprises 643 residues: NADH-ubiquinone oxidoreductase chain 5 (643 aa).

16 helical membrane-spanning segments follow: residues 7–27 (IIIL…VFFF), 64–84 (LLKT…IFNI), 114–134 (TFLS…YYYM), 140–160 (PNNF…LTST), 163–183 (IFLL…LISW), 208–228 (ILLF…PEIF), 230–250 (ISAP…AAAG), 277–297 (SSTM…LYAC), 301–321 (FNTW…TTAI), 338–358 (LGLM…FHIC), 398–418 (AACI…PGFY), 437–457 (IVLS…IIFF), 486–506 (ALGT…VPII), 511–531 (VLKT…ISIL), 555–575 (FYEN…SLSL), and 615–635 (YLLF…TTIS).

The protein belongs to the complex I subunit 5 family.

The protein localises to the mitochondrion inner membrane. It catalyses the reaction a ubiquinone + NADH + 5 H(+)(in) = a ubiquinol + NAD(+) + 4 H(+)(out). In terms of biological role, core subunit of the mitochondrial membrane respiratory chain NADH dehydrogenase (Complex I) that is believed to belong to the minimal assembly required for catalysis. Complex I functions in the transfer of electrons from NADH to the respiratory chain. The immediate electron acceptor for the enzyme is believed to be ubiquinone. The polypeptide is NADH-ubiquinone oxidoreductase chain 5 (ND5) (Patiria pectinifera (Starfish)).